The sequence spans 171 residues: Photosystem I assembly protein Ycf3 (171 aa).

TPR repeat units lie at residues 35 to 68 (AFTY…EIDP), 72 to 105 (SYIL…NPSL), and 120 to 153 (GEQA…APNN).

It belongs to the Ycf3 family.

It localises to the plastid. The protein resides in the chloroplast thylakoid membrane. Essential for the assembly of the photosystem I (PSI) complex. May act as a chaperone-like factor to guide the assembly of the PSI subunits. The protein is Photosystem I assembly protein Ycf3 of Psilotum nudum (Whisk fern).